A 373-amino-acid chain; its full sequence is Cyclin-A3-1 (373 aa).

The segment at 50 to 80 (AVVLKPQPAPRGGKRAASHAAEPKKPAPPPA) is disordered.

It belongs to the cyclin family. Cyclin AB subfamily.

The chain is Cyclin-A3-1 (CYCA3-1) from Oryza sativa subsp. japonica (Rice).